Consider the following 433-residue polypeptide: Succinate--CoA ligase [ADP-forming] subunit beta, mitochondrial (433 aa).

The N-terminal 23 residues, 1-23 (MLTRSVLRKAPRAFSPFLQKRNL), are a transit peptide targeting the mitochondrion. The 243-residue stretch at 31 to 273 (HDILRKFGVD…ISQEDPDEAR (243 aa)) folds into the ATP-grasp domain. Residues Lys-68, 75-77 (GRG), and Glu-136 each bind ATP. Residues Asn-228 and Asp-242 each coordinate Mg(2+). Substrate is bound by residues Asn-293 and 350-352 (GIV).

This sequence belongs to the succinate/malate CoA ligase beta subunit family. Heterodimer of an alpha and a beta subunit. It depends on Mg(2+) as a cofactor.

Its subcellular location is the mitochondrion. The enzyme catalyses succinate + ATP + CoA = succinyl-CoA + ADP + phosphate. It functions in the pathway carbohydrate metabolism; tricarboxylic acid cycle; succinate from succinyl-CoA (ligase route): step 1/1. Succinyl-CoA synthetase functions in the citric acid cycle (TCA), coupling the hydrolysis of succinyl-CoA to the synthesis of ATP and thus represents the only step of substrate-level phosphorylation in the TCA. The beta subunit provides nucleotide specificity of the enzyme and binds the substrate succinate, while the binding sites for coenzyme A and phosphate are found in the alpha subunit. In Schizosaccharomyces pombe (strain 972 / ATCC 24843) (Fission yeast), this protein is Succinate--CoA ligase [ADP-forming] subunit beta, mitochondrial.